The sequence spans 312 residues: Aspartoacylase (312 aa).

The Zn(2+) site is built by H20 and E23. N-acetyl-L-aspartate is bound by residues R62, N69, and R70. H115 serves as a coordination point for Zn(2+). The N-acetyl-L-aspartate site is built by Y163 and R167. Catalysis depends on E177, which acts as the Proton donor/acceptor. An N-acetyl-L-aspartate-binding site is contributed by Y287.

Belongs to the AspA/AstE family. Aspartoacylase subfamily. In terms of assembly, homodimer. Zn(2+) serves as cofactor.

The protein resides in the cytoplasm. The protein localises to the nucleus. It carries out the reaction an N-acyl-L-aspartate + H2O = a carboxylate + L-aspartate. The catalysed reaction is N-acetyl-L-aspartate + H2O = L-aspartate + acetate. Functionally, catalyzes the deacetylation of N-acetylaspartic acid (NAA) to produce acetate and L-aspartate. NAA occurs in high concentration in brain and its hydrolysis NAA plays a significant part in the maintenance of intact white matter. In other tissues it acts as a scavenger of NAA from body fluids. The chain is Aspartoacylase from Mus musculus (Mouse).